Here is a 2193-residue protein sequence, read N- to C-terminus: Protein sidekick-1 (2193 aa).

A compositionally biased stretch (low complexity) spans 1–23; that stretch reads MARARPSVAGGGVAAPPERAGPG. The interval 1-56 is disordered; the sequence is MARARPSVAGGGVAAPPERAGPGRPRRSRTGHHCDPECPGLRAAPRTPGPGAGRRA. Ig-like C2-type domains lie at 86–168, 173–259, 275–363, 368–458, and 462–551; these read PYFK…SEIQ, GNFM…SPFI, PIIV…AFLS, PYFT…LDVT, and PAFT…AMLT. Residues Cys-108 and Cys-151 are joined by a disulfide bond. 3 N-linked (GlcNAc...) asparagine glycosylation sites follow: Asn-123, Asn-253, and Asn-283. 3 disulfide bridges follow: Cys-297-Cys-344, Cys-390-Cys-440, and Cys-483-Cys-535. Asn-532, Asn-545, and Asn-554 each carry an N-linked (GlcNAc...) asparagine glycan. Residues 556–645 enclose the Ig-like C2-type 6 domain; that stretch reads TSIVHPPEDR…GSDSRTARLE (90 aa). The cysteines at positions 577 and 629 are disulfide-linked. 13 consecutive Fibronectin type-III domains span residues 652–748, 753–849, 854–952, 956–1050, 1054–1153, 1158–1256, 1261–1358, 1362–1456, 1461–1558, 1563–1681, 1686–1782, 1786–1881, and 1884–1982; these read PPQN…LPEE, PPKN…TLQG, PPQN…THED, AVGH…VPPD, APSN…TLQA, APTS…TRES, APEN…TKDD, PPVR…TEKR, PPRE…TLQD, PPGS…VGEA, APQN…THQA, PPSF…AGPA, and SPGS…SAQA. N-linked (GlcNAc...) asparagine glycans are attached at residues Asn-764, Asn-803, Asn-864, Asn-997, and Asn-1006. Asn-1264 and Asn-1315 each carry an N-linked (GlcNAc...) asparagine glycan. Asn-1636, Asn-1730, Asn-1801, and Asn-1875 each carry an N-linked (GlcNAc...) asparagine glycan. Residues 1992-2012 traverse the membrane as a helical segment; sequence FLLVMALSSLLLILLVVFVLV. Over 2013 to 2193 the chain is Cytoplasmic; that stretch reads LHGQSKKYKS…APLTGFSSFV (181 aa). The interval 2057–2080 is disordered; it reads STFSKKNGTRSPPRPSPGGLHYSD. Residues 2187 to 2193 carry the PDZ-binding motif; sequence TGFSSFV.

Belongs to the sidekick family. Homodimer; mediates homophilic interactions to promote cell adhesion. Interacts (via PDZ-binding motif) with MAGI1, MAGI2, DLG2, DLG3 and DLG4. As to quaternary structure, does not mediate homophilic interactions. Expressed by non-overlapping subsets of retinal neurons. Sdk1 and Sdk2 are expressed in non-overlapping subsets of interneurons and retinal ganglion cells (RGCs) that form synapses in distinct inner plexiform layer (IPL) sublaminae (at protein level).

It localises to the cell membrane. It is found in the synapse. In terms of biological role, adhesion molecule that promotes lamina-specific synaptic connections in the retina. Expressed in specific subsets of interneurons and retinal ganglion cells (RGCs) and promotes synaptic connectivity via homophilic interactions. This chain is Protein sidekick-1, found in Mus musculus (Mouse).